A 94-amino-acid polypeptide reads, in one-letter code: MPRAPNDAPSASATPSATPASYEAAMAELETLVASMESGELPLEASLAAYRRGAELVKYCQQVLERVEQQVRVLDGDALKPLGDDSNTNEQGDA.

Residues 1-21 (MPRAPNDAPSASATPSATPAS) are disordered.

Belongs to the XseB family. As to quaternary structure, heterooligomer composed of large and small subunits.

The protein resides in the cytoplasm. The catalysed reaction is Exonucleolytic cleavage in either 5'- to 3'- or 3'- to 5'-direction to yield nucleoside 5'-phosphates.. In terms of biological role, bidirectionally degrades single-stranded DNA into large acid-insoluble oligonucleotides, which are then degraded further into small acid-soluble oligonucleotides. The chain is Exodeoxyribonuclease 7 small subunit from Ralstonia pickettii (strain 12J).